A 271-amino-acid chain; its full sequence is N-acetylaspartate synthetase (271 aa).

Residues M1–A38 form a disordered region. Residues C12–S24 are compositionally biased toward pro residues. Over residues G25–G37 the composition is skewed to low complexity. A helical membrane pass occupies residues V89–C109. In terms of domain architecture, N-acetyltransferase spans L115–Q258.

The protein belongs to the NAT8 family.

It localises to the cytoplasm. It is found in the microsome membrane. The protein localises to the mitochondrion membrane. The protein resides in the endoplasmic reticulum membrane. It carries out the reaction L-aspartate + acetyl-CoA = N-acetyl-L-aspartate + CoA + H(+). Its function is as follows. Catalyzes the synthesis of N-acetylaspartate acid (NAA) from L-aspartate and acetyl-CoA. The polypeptide is N-acetylaspartate synthetase (nat8l) (Xenopus tropicalis (Western clawed frog)).